A 209-amino-acid polypeptide reads, in one-letter code: Imidazoleglycerol-phosphate dehydratase (209 aa).

The interval 1-23 (MQLSDRPLTAPGTAPRQATVSRR) is disordered.

The protein belongs to the imidazoleglycerol-phosphate dehydratase family.

Its subcellular location is the cytoplasm. It catalyses the reaction D-erythro-1-(imidazol-4-yl)glycerol 3-phosphate = 3-(imidazol-4-yl)-2-oxopropyl phosphate + H2O. It participates in amino-acid biosynthesis; L-histidine biosynthesis; L-histidine from 5-phospho-alpha-D-ribose 1-diphosphate: step 6/9. In Synechococcus elongatus (strain ATCC 33912 / PCC 7942 / FACHB-805) (Anacystis nidulans R2), this protein is Imidazoleglycerol-phosphate dehydratase.